The chain runs to 530 residues: uncharacterized protein (530 aa).

Belongs to the protein kinase superfamily. ADCK protein kinase family.

This is an uncharacterized protein from Clostridium pasteurianum.